A 263-amino-acid polypeptide reads, in one-letter code: Protein maestro (263 aa).

Residues 1 to 21 (MDQTPRRMLGQPLSSPATQPK) form a disordered region. Residues 128 to 163 (SFFIDITLQTRTLLDDENDSLRYSAFVLFGQLADLA) form an HEAT repeat.

Its subcellular location is the nucleus. It localises to the nucleolus. The polypeptide is Protein maestro (MRO) (Bos taurus (Bovine)).